Here is a 172-residue protein sequence, read N- to C-terminus: Large ribosomal subunit protein uL10 (172 aa).

This sequence belongs to the universal ribosomal protein uL10 family. As to quaternary structure, part of the ribosomal stalk of the 50S ribosomal subunit. The N-terminus interacts with L11 and the large rRNA to form the base of the stalk. The C-terminus forms an elongated spine to which L12 dimers bind in a sequential fashion forming a multimeric L10(L12)X complex.

Its function is as follows. Forms part of the ribosomal stalk, playing a central role in the interaction of the ribosome with GTP-bound translation factors. This is Large ribosomal subunit protein uL10 from Rhizobium leguminosarum bv. trifolii (strain WSM2304).